The primary structure comprises 180 residues: uncharacterized protein (180 aa).

Residues 3-33 adopt a coiled-coil conformation; it reads QQQSNNSNDNKEQLDRVIESLNRVNSETKQI.

This is an uncharacterized protein from Acanthamoeba polyphaga (Amoeba).